Here is a 351-residue protein sequence, read N- to C-terminus: MSLVCLTDFQAHAREQLSKSTRDFIEGGADDSITRDDNIAAFKRIRLRPRYLRDVSEVDTRTTIQGEEISAPICIAPTGFHCLVWPDGEMSTARAAQAAGICYITSTFASCSLEDIVIAAPEGLRWFQLYVHPDLQLNKQLIQRVESLGFKALVITLDTPVCGNRRHDIRNQLRRNLTLTDLQSPKKGNAIPYFQMTPISTSLCWNDLSWFQSITRLPIILKGILTKEDAELAVKHNVQGIIVSNHGGRQLDEVLASIDALTEVVAAVKGKIEVYLDGGVRTGNDVLKALALGAKCIFLGRPILWGLACKGEHGVKEVLNILTNEFHTSMALTGCRSVAEINRNLVQFSRL.

Residues 2–351 (SLVCLTDFQA…NRNLVQFSRL (350 aa)) form the FMN hydroxy acid dehydrogenase domain. Residues 77-79 (PTG), S106, and Q128 contribute to the FMN site. Residue Y130 participates in a 2-oxocarboxylate binding. T156 is an FMN binding site. Residue R165 coordinates a 2-oxocarboxylate. The residue at position 178 (T178) is a Phosphothreonine. FMN is bound at residue K222. H246 acts as the Proton acceptor in catalysis. A 2-oxocarboxylate is bound at residue R249. Residues 277–281 (DGGVR) and 300–301 (GR) contribute to the FMN site. The Microbody targeting signal motif lies at 349 to 351 (SRL).

This sequence belongs to the FMN-dependent alpha-hydroxy acid dehydrogenase family. As to quaternary structure, homotetramer. It depends on FMN as a cofactor. Expressed in the liver and kidney.

The protein resides in the peroxisome. The enzyme catalyses a (2S)-2-hydroxycarboxylate + O2 = a 2-oxocarboxylate + H2O2. It carries out the reaction 2-hydroxyhexadecanoate + O2 = 2-oxohexadecanoate + H2O2. The catalysed reaction is 2-hydroxyoctanoate + O2 = 2-oxooctanoate + H2O2. It functions in the pathway lipid metabolism; fatty acid metabolism. Functionally, oxidase that catalyzes the oxidation of medium and long chain hydroxyacids such as 2-hydroxyhexadecanoate and 2-hydroxyoctanoate, to the correspondong 2-oxoacids. Its role in the oxidation of 2-hydroxy fatty acids may contribute to the general pathway of fatty acid alpha-oxidation. Active in vitro with the artificial electron acceptor 2,6-dichlorophenolindophenol (DCIP), but O2 is believed to be the physiological electron acceptor, leading to the production of H2O2. Is not active on glycolate, glyoxylate, L-lactate and 2-hydroxybutanoate. The protein is 2-Hydroxyacid oxidase 2 (HAO2) of Homo sapiens (Human).